The following is a 128-amino-acid chain: Probable prefoldin subunit 6 (128 aa).

It belongs to the prefoldin subunit beta family. Heterohexamer of two PFD-alpha type and four PFD-beta type subunits.

It localises to the cytoplasm. In terms of biological role, binds specifically to cytosolic chaperonin (c-CPN) and transfers target proteins to it. Binds to nascent polypeptide chain and promotes folding in an environment in which there are many competing pathways for nonnative proteins. Required for positioning of the mitotic spindle. The protein is Probable prefoldin subunit 6 of Caenorhabditis briggsae.